Reading from the N-terminus, the 224-residue chain is uncharacterized protein (224 aa).

The first 23 residues, 1-23 (MKKLLAAGIIGLLTVSIASPSFA), serve as a signal peptide directing secretion. A VWFA domain is found at 31-224 (NVAVLFDGSG…WEKEAQKFTE (194 aa)).

It to B.subtilis YwmC.

This is an uncharacterized protein from Bacillus subtilis (strain 168).